We begin with the raw amino-acid sequence, 108 residues long: Cell division topological specificity factor (108 aa).

The protein belongs to the MinE family.

In terms of biological role, prevents the cell division inhibition by proteins MinC and MinD at internal division sites while permitting inhibition at polar sites. This ensures cell division at the proper site by restricting the formation of a division septum at the midpoint of the long axis of the cell. In Prochlorococcus marinus (strain MIT 9215), this protein is Cell division topological specificity factor.